The following is a 388-amino-acid chain: S-adenosylmethionine synthase (388 aa).

An ATP-binding site is contributed by H17. Position 19 (D19) interacts with Mg(2+). E45 serves as a coordination point for K(+). Residues E58 and Q102 each contribute to the L-methionine site. Residues Q102 to A112 form a flexible loop region. ATP contacts are provided by residues D167–K169, R232–F233, D241, R247–K248, A264, and K268. Position 241 (D241) interacts with L-methionine. K272 is a binding site for L-methionine.

This sequence belongs to the AdoMet synthase family. Homotetramer; dimer of dimers. The cofactor is Mg(2+). Requires K(+) as cofactor.

The protein localises to the cytoplasm. It carries out the reaction L-methionine + ATP + H2O = S-adenosyl-L-methionine + phosphate + diphosphate. The protein operates within amino-acid biosynthesis; S-adenosyl-L-methionine biosynthesis; S-adenosyl-L-methionine from L-methionine: step 1/1. Catalyzes the formation of S-adenosylmethionine (AdoMet) from methionine and ATP. The overall synthetic reaction is composed of two sequential steps, AdoMet formation and the subsequent tripolyphosphate hydrolysis which occurs prior to release of AdoMet from the enzyme. The protein is S-adenosylmethionine synthase of Paramagnetospirillum magneticum (strain ATCC 700264 / AMB-1) (Magnetospirillum magneticum).